We begin with the raw amino-acid sequence, 280 residues long: uncharacterized protein (280 aa).

This sequence belongs to the metallo-dependent hydrolases superfamily.

This is an uncharacterized protein from Methanocaldococcus jannaschii (strain ATCC 43067 / DSM 2661 / JAL-1 / JCM 10045 / NBRC 100440) (Methanococcus jannaschii).